Reading from the N-terminus, the 414-residue chain is L-cysteine:1D-myo-inositol 2-amino-2-deoxy-alpha-D-glucopyranoside ligase (414 aa).

Cys44 contributes to the Zn(2+) binding site. L-cysteinyl-5'-AMP is bound by residues 44-47 (CGIT), Thr59, and 82-84 (NIT). Positions 46 to 56 (ITPYDSTHLGH) match the 'HIGH' region motif. The 'ERGGDP' region signature appears at 188 to 193 (ERGGDP). Residue Trp228 participates in L-cysteinyl-5'-AMP binding. Cys232 contributes to the Zn(2+) binding site. Residue 250–252 (GSD) participates in L-cysteinyl-5'-AMP binding. Zn(2+) is bound at residue His257. L-cysteinyl-5'-AMP is bound at residue Ile284. The 'KMSKS' region signature appears at 290 to 294 (KMSKS).

This sequence belongs to the class-I aminoacyl-tRNA synthetase family. MshC subfamily. Monomer. The cofactor is Zn(2+).

The enzyme catalyses 1D-myo-inositol 2-amino-2-deoxy-alpha-D-glucopyranoside + L-cysteine + ATP = 1D-myo-inositol 2-(L-cysteinylamino)-2-deoxy-alpha-D-glucopyranoside + AMP + diphosphate + H(+). Functionally, catalyzes the ATP-dependent condensation of GlcN-Ins and L-cysteine to form L-Cys-GlcN-Ins. In Corynebacterium aurimucosum (strain ATCC 700975 / DSM 44827 / CIP 107346 / CN-1) (Corynebacterium nigricans), this protein is L-cysteine:1D-myo-inositol 2-amino-2-deoxy-alpha-D-glucopyranoside ligase.